Here is a 143-residue protein sequence, read N- to C-terminus: Transcriptional regulator MraZ (143 aa).

SpoVT-AbrB domains follow at residues 5–47 (EYLH…PLDE) and 76–119 (ATEC…SQAL).

Belongs to the MraZ family. Forms oligomers.

Its subcellular location is the cytoplasm. It is found in the nucleoid. The sequence is that of Transcriptional regulator MraZ from Desulfitobacterium hafniense (strain DSM 10664 / DCB-2).